The sequence spans 291 residues: MAAEEHALTSTEYIKHHLTNLTYGKMPDGTWKLAENAKEAQEMGFSAIHLDSMGWSIGLGIIFCLVFWCAAKAAKADVPSKFQSAIEMIIEFVDSSVRDTFHGKSRLIAPLALTIFVWIFLMNLMDLIPVDWVPMLAQIVGAHVFGMDPHHVYFKIVPSTDPNITLGMSLSVFVLILFYSIREKGIGGFVGELALNPFNPSNPVAKALLIPVNLILELVTFLARPISLALRLFGNMYAGELIFILIALLPFWIQWALSVPWAIFHILVITLQAFIFMMLTIVYLSMASEKH.

A run of 5 helical transmembrane segments spans residues 48-68, 108-128, 161-181, 241-261, and 262-282; these read IHLD…LVFW, IAPL…MDLI, DPNI…FYSI, LIFI…SVPW, and AIFH…LTIV.

Belongs to the ATPase A chain family. As to quaternary structure, F-type ATPases have 2 components, CF(1) - the catalytic core - and CF(0) - the membrane proton channel. CF(1) has five subunits: alpha(3), beta(3), gamma(1), delta(1), epsilon(1). CF(0) has three main subunits: a(1), b(2) and c(9-12). The alpha and beta chains form an alternating ring which encloses part of the gamma chain. CF(1) is attached to CF(0) by a central stalk formed by the gamma and epsilon chains, while a peripheral stalk is formed by the delta and b chains.

The protein resides in the cell inner membrane. Its function is as follows. Key component of the proton channel; it plays a direct role in the translocation of protons across the membrane. This Acinetobacter baylyi (strain ATCC 33305 / BD413 / ADP1) protein is ATP synthase subunit a.